A 170-amino-acid polypeptide reads, in one-letter code: NAD(P)H-quinone oxidoreductase subunit I, chloroplastic (170 aa).

2 consecutive 4Fe-4S ferredoxin-type domains span residues 55 to 84 (GRIHFEFDKCIACEVCVRACPIDLPVVDWK) and 95 to 124 (LNYSIDFGICIFCGNCVEYCPTNCLSMTEE). The [4Fe-4S] cluster site is built by cysteine 64, cysteine 67, cysteine 70, cysteine 74, cysteine 104, cysteine 107, cysteine 110, and cysteine 114.

The protein belongs to the complex I 23 kDa subunit family. In terms of assembly, NDH is composed of at least 16 different subunits, 5 of which are encoded in the nucleus. [4Fe-4S] cluster serves as cofactor.

The protein resides in the plastid. It localises to the chloroplast thylakoid membrane. It catalyses the reaction a plastoquinone + NADH + (n+1) H(+)(in) = a plastoquinol + NAD(+) + n H(+)(out). It carries out the reaction a plastoquinone + NADPH + (n+1) H(+)(in) = a plastoquinol + NADP(+) + n H(+)(out). NDH shuttles electrons from NAD(P)H:plastoquinone, via FMN and iron-sulfur (Fe-S) centers, to quinones in the photosynthetic chain and possibly in a chloroplast respiratory chain. The immediate electron acceptor for the enzyme in this species is believed to be plastoquinone. Couples the redox reaction to proton translocation, and thus conserves the redox energy in a proton gradient. In Spinacia oleracea (Spinach), this protein is NAD(P)H-quinone oxidoreductase subunit I, chloroplastic.